The chain runs to 360 residues: Phospho-N-acetylmuramoyl-pentapeptide-transferase (360 aa).

The next 10 membrane-spanning stretches (helical) occupy residues 25 to 45 (RGIL…PWMI), 73 to 93 (TMGG…WADL), 97 to 117 (YVWV…VDDY), 135 to 155 (FWQS…APSA), 170 to 190 (IPLG…SSNA), 199 to 219 (GLAI…CYLS), 236 to 256 (AGEL…FLWF), 263 to 283 (VFMG…MAVI), 288 to 308 (IVLF…VIQV), and 338 to 358 (VIVR…ATLK).

Belongs to the glycosyltransferase 4 family. MraY subfamily. Requires Mg(2+) as cofactor.

The protein localises to the cell inner membrane. It catalyses the reaction UDP-N-acetyl-alpha-D-muramoyl-L-alanyl-gamma-D-glutamyl-meso-2,6-diaminopimeloyl-D-alanyl-D-alanine + di-trans,octa-cis-undecaprenyl phosphate = di-trans,octa-cis-undecaprenyl diphospho-N-acetyl-alpha-D-muramoyl-L-alanyl-D-glutamyl-meso-2,6-diaminopimeloyl-D-alanyl-D-alanine + UMP. It functions in the pathway cell wall biogenesis; peptidoglycan biosynthesis. Its function is as follows. Catalyzes the initial step of the lipid cycle reactions in the biosynthesis of the cell wall peptidoglycan: transfers peptidoglycan precursor phospho-MurNAc-pentapeptide from UDP-MurNAc-pentapeptide onto the lipid carrier undecaprenyl phosphate, yielding undecaprenyl-pyrophosphoryl-MurNAc-pentapeptide, known as lipid I. In Pseudomonas savastanoi pv. phaseolicola (strain 1448A / Race 6) (Pseudomonas syringae pv. phaseolicola (strain 1448A / Race 6)), this protein is Phospho-N-acetylmuramoyl-pentapeptide-transferase.